A 143-amino-acid chain; its full sequence is Cold shock domain-containing protein CG9705 (143 aa).

Positions 1–30 (MTEPRTPEKLLAAKPPVLHHNSHSPNASLQ) are disordered. Residues Ser22, Ser24, Ser28, and Ser33 each carry the phosphoserine modification. The CSD domain occupies 54–121 (VVTGMVKSFS…KHQAVHVQIS (68 aa)). Phosphoserine occurs at positions 139 and 140.

The protein is Cold shock domain-containing protein CG9705 of Drosophila melanogaster (Fruit fly).